The following is a 282-amino-acid chain: Phosphate import ATP-binding protein PstB (282 aa).

The segment covering 1–10 (MNMAESHLDP) has biased composition (basic and acidic residues). The interval 1–24 (MNMAESHLDPSKLATGPAGAGAAT) is disordered. Residues 14–24 (ATGPAGAGAAT) are compositionally biased toward low complexity. The region spanning 36-277 (IEVKNLNFFY…PARKETEDYI (242 aa)) is the ABC transporter domain. 68-75 (GPSGCGKS) is a binding site for ATP.

The protein belongs to the ABC transporter superfamily. Phosphate importer (TC 3.A.1.7) family. In terms of assembly, the complex is composed of two ATP-binding proteins (PstB), two transmembrane proteins (PstC and PstA) and a solute-binding protein (PstS).

Its subcellular location is the cell inner membrane. It carries out the reaction phosphate(out) + ATP + H2O = ADP + 2 phosphate(in) + H(+). Part of the ABC transporter complex PstSACB involved in phosphate import. Responsible for energy coupling to the transport system. This is Phosphate import ATP-binding protein PstB from Burkholderia thailandensis (strain ATCC 700388 / DSM 13276 / CCUG 48851 / CIP 106301 / E264).